Reading from the N-terminus, the 273-residue chain is Putative phosphoenolpyruvate synthase regulatory protein (273 aa).

Position 153–160 (glycine 153–threonine 160) interacts with ADP.

This sequence belongs to the pyruvate, phosphate/water dikinase regulatory protein family. PSRP subfamily.

It catalyses the reaction [pyruvate, water dikinase] + ADP = [pyruvate, water dikinase]-phosphate + AMP + H(+). The catalysed reaction is [pyruvate, water dikinase]-phosphate + phosphate + H(+) = [pyruvate, water dikinase] + diphosphate. Its function is as follows. Bifunctional serine/threonine kinase and phosphorylase involved in the regulation of the phosphoenolpyruvate synthase (PEPS) by catalyzing its phosphorylation/dephosphorylation. This chain is Putative phosphoenolpyruvate synthase regulatory protein, found in Yersinia pseudotuberculosis serotype I (strain IP32953).